The chain runs to 353 residues: Photosystem II protein D1 (353 aa).

Residue Thr2 is modified to N-acetylthreonine. Thr2 carries the phosphothreonine modification. Helical transmembrane passes span 29–46 (YIGW…TATS), 118–133 (HFFI…EWEL), and 142–156 (WIAV…AATA). His118 is a binding site for chlorophyll a. A pheophytin a-binding site is contributed by Tyr126. [CaMn4O5] cluster is bound by residues Asp170 and Glu189. The helical transmembrane segment at 197-218 (FHMLGVAGVFGGSLFSAMHGSL) threads the bilayer. Position 198 (His198) interacts with chlorophyll a. A quinone contacts are provided by residues His215 and 264-265 (SF). His215 contacts Fe cation. His272 provides a ligand contact to Fe cation. Residues 274–288 (FLAIWPVVGIWFTAL) form a helical membrane-spanning segment. [CaMn4O5] cluster-binding residues include His332, Glu333, Asp342, and Ala344. Positions 345 to 353 (SVEAPSING) are excised as a propeptide.

The protein belongs to the reaction center PufL/M/PsbA/D family. As to quaternary structure, PSII is composed of 1 copy each of membrane proteins PsbA, PsbB, PsbC, PsbD, PsbE, PsbF, PsbH, PsbI, PsbJ, PsbK, PsbL, PsbM, PsbT, PsbX, PsbY, PsbZ, Psb30/Ycf12, at least 3 peripheral proteins of the oxygen-evolving complex and a large number of cofactors. It forms dimeric complexes. The D1/D2 heterodimer binds P680, chlorophylls that are the primary electron donor of PSII, and subsequent electron acceptors. It shares a non-heme iron and each subunit binds pheophytin, quinone, additional chlorophylls, carotenoids and lipids. D1 provides most of the ligands for the Mn4-Ca-O5 cluster of the oxygen-evolving complex (OEC). There is also a Cl(-1) ion associated with D1 and D2, which is required for oxygen evolution. The PSII complex binds additional chlorophylls, carotenoids and specific lipids. is required as a cofactor. Post-translationally, tyr-161 forms a radical intermediate that is referred to as redox-active TyrZ, YZ or Y-Z. In terms of processing, C-terminally processed by CTPA; processing is essential to allow assembly of the oxygen-evolving complex and thus photosynthetic growth.

Its subcellular location is the plastid. It is found in the chloroplast thylakoid membrane. The catalysed reaction is 2 a plastoquinone + 4 hnu + 2 H2O = 2 a plastoquinol + O2. Photosystem II (PSII) is a light-driven water:plastoquinone oxidoreductase that uses light energy to abstract electrons from H(2)O, generating O(2) and a proton gradient subsequently used for ATP formation. It consists of a core antenna complex that captures photons, and an electron transfer chain that converts photonic excitation into a charge separation. The D1/D2 (PsbA/PsbD) reaction center heterodimer binds P680, the primary electron donor of PSII as well as several subsequent electron acceptors. The polypeptide is Photosystem II protein D1 (Stigeoclonium helveticum (Green alga)).